The sequence spans 161 residues: Endoribonuclease YbeY (161 aa).

His-127, His-131, and His-137 together coordinate Zn(2+).

It belongs to the endoribonuclease YbeY family. Zn(2+) is required as a cofactor.

The protein localises to the cytoplasm. In terms of biological role, single strand-specific metallo-endoribonuclease involved in late-stage 70S ribosome quality control and in maturation of the 3' terminus of the 16S rRNA. This is Endoribonuclease YbeY from Listeria welshimeri serovar 6b (strain ATCC 35897 / DSM 20650 / CCUG 15529 / CIP 8149 / NCTC 11857 / SLCC 5334 / V8).